Here is a 536-residue protein sequence, read N- to C-terminus: Phosphoenolpyruvate carboxykinase (ATP) (536 aa).

Substrate is bound by residues Arg-61, Tyr-195, and Lys-201. Residues Lys-201, His-220, and 236 to 244 contribute to the ATP site; that span reads GLSGTGKTT. Positions 201 and 220 each coordinate Mn(2+). Residue Asp-257 participates in Mn(2+) binding. ATP is bound by residues Glu-285, Arg-322, and Thr-447. Arg-322 contacts substrate.

It belongs to the phosphoenolpyruvate carboxykinase (ATP) family. It depends on Mn(2+) as a cofactor.

Its subcellular location is the cytoplasm. The enzyme catalyses oxaloacetate + ATP = phosphoenolpyruvate + ADP + CO2. It functions in the pathway carbohydrate biosynthesis; gluconeogenesis. In terms of biological role, involved in the gluconeogenesis. Catalyzes the conversion of oxaloacetate (OAA) to phosphoenolpyruvate (PEP) through direct phosphoryl transfer between the nucleoside triphosphate and OAA. The sequence is that of Phosphoenolpyruvate carboxykinase (ATP) from Rhizobium leguminosarum bv. trifolii (strain WSM2304).